We begin with the raw amino-acid sequence, 317 residues long: Melanocyte-stimulating hormone receptor (317 aa).

The Extracellular portion of the chain corresponds to 1–37 (MPVQGSQRRLLGSLNSTPTATPHLGLAANQTGARCLE). A glycan (N-linked (GlcNAc...) asparagine) is linked at N29. A helical transmembrane segment spans residues 38–63 (VSIPDGLFLSLGLVSLVENVLVVTAI). The Cytoplasmic portion of the chain corresponds to 64–72 (AKNRNLHSP). The helical transmembrane segment at 73–93 (MYCFICCLALSDLLVSGSNML) threads the bilayer. Topologically, residues 94-118 (ETAVILLLEAGALAARAAVVQQLDN) are extracellular. A helical membrane pass occupies residues 119-140 (VIDVITCSSMLSSLCFLGAIAV). Residues 141–163 (DRYISIFYALRYHSIVTLPRARR) are Cytoplasmic-facing. Residues 164–183 (AVAAIWVASVLFSMLFIAYY) traverse the membrane as a helical segment. Over 184 to 191 (DHAAVLLC) the chain is Extracellular. The chain crosses the membrane as a helical span at residues 192-211 (LVVFFLAMLVLMAVLYVHML). The Cytoplasmic segment spans residues 212–240 (ARACQHAQGIARLHKRQCPAHQGFGLKGA). Residues 241–266 (ATLTILLGIFFLCWGPFFLHLTLIVL) traverse the membrane as a helical segment. Topologically, residues 267 to 279 (CPQHPTCSCIFKN) are extracellular. Residues 280–300 (FNLFLALIICNAIIDPLIYAF) traverse the membrane as a helical segment. Topologically, residues 301-317 (RSQELRRTLKEVLLCSW) are cytoplasmic. C315 carries the S-palmitoyl cysteine lipid modification.

It belongs to the G-protein coupled receptor 1 family. Interacts with MGRN1, but does not undergo MGRN1-mediated ubiquitination; this interaction competes with GNAS-binding and thus inhibits agonist-induced cAMP production. Interacts with OPN3; the interaction results in a decrease in MC1R-mediated cAMP signaling and ultimately a decrease in melanin production in melanocytes.

Its subcellular location is the cell membrane. Its function is as follows. Receptor for MSH (alpha, beta and gamma) and ACTH. The activity of this receptor is mediated by G proteins which activate adenylate cyclase. Mediates melanogenesis, the production of eumelanin (black/brown) and phaeomelanin (red/yellow), via regulation of cAMP signaling in melanocytes. The protein is Melanocyte-stimulating hormone receptor (MC1R) of Chlorocebus aethiops (Green monkey).